We begin with the raw amino-acid sequence, 768 residues long: Multidomain esterase (768 aa).

The first 40 residues, Met1–Ala40, serve as a signal peptide directing secretion. Residues Ala41–Leu264 form an acetylxylan esterase region. Ser68 (nucleophile; for acetylxylan esterase activity) is an active-site residue. Active-site for acetylxylan esterase activity residues include Asp240 and His243. A compositionally biased stretch (low complexity) spans Ser267–Ser283. Residues Ser267 to Tyr289 are disordered. A Dockerin domain is found at Pro285 to Val352. Residues Ala353–Tyr768 form a glucuronoyl esterase region. A GXSYXG catalytic site motif motif is present at residues Gly563–Gly568. Ser565 functions as the Nucleophile; for glucuronoyl esterase activity in the catalytic mechanism. Lys569, Glu633, and Trp679 together coordinate substrate.

This sequence in the N-terminal section; belongs to the carbohydrate esterase 3 (CE3) family. The protein in the C-terminal section; belongs to the carbohydrate esterase 15 (CE15) family.

The protein localises to the secreted. It carries out the reaction Deacetylation of xylans and xylo-oligosaccharides.. The enzyme catalyses a 4-O-methyl-alpha-D-glucuronosyl ester derivative + H2O = 4-O-methyl-alpha-D-glucuronate derivative + an alcohol + H(+). It functions in the pathway glycan degradation; xylan degradation. Its function is as follows. Esterase involved in the degradation of plant cell wall polysaccharides. Catalyzes the deacetylation of chemically acetylated xylan and native, steam-extracted xylan. Seems to act in synergy with the xylanase XynD which produces xylo-oligosaccharides. Also catalyzes the deesterification of methyl esters of 4-O-methyl-D-glucuronic acid (MeGlcA) side residues in synthetic glucuronoxylan methyl ester, suggesting that it may be able to cleave ester linkages between MeGlcA carboxyl and more complex alcohols, including linkages between hemicellulose and lignin alcohols in plant cell walls. The protein is Multidomain esterase of Ruminococcus flavefaciens.